A 120-amino-acid polypeptide reads, in one-letter code: MSAVPLTRMLPLRFLTHLLLLSFIPLYFCMEFSEDARNIEKIRRGNQWAIGHFMGKKSLQDTYNPSEQDMDSEDFRPRIIEMIRGTFRQEPIRALSPRKQDEIQWMLKKIMDDYIKTTQK.

A signal peptide spans 1-29; that stretch reads MSAVPLTRMLPLRFLTHLLLLSFIPLYFC. Positions 30 to 44 are excised as a propeptide; that stretch reads MEFSEDARNIEKIRR. Position 54 is a methionine amide (M54). Positions 58 to 120 are excised as a propeptide; the sequence is SLQDTYNPSE…MDDYIKTTQK (63 aa).

This sequence belongs to the bombesin/neuromedin-B/ranatensin family. Brain, intestine, and ovaries and early embryos (stages 2 and 10).

The protein resides in the secreted. Functionally, stimulates smooth muscle contraction. The polypeptide is Neuromedin-B (nmb) (Xenopus laevis (African clawed frog)).